We begin with the raw amino-acid sequence, 269 residues long: Nitrite transporter NirC (269 aa).

Residues 1 to 29 lie on the Cytoplasmic side of the membrane; the sequence is MFTDTINKCAANAARIARLSANNPLGFWV. The helical transmembrane segment at 30–46 threads the bilayer; that stretch reads SSAMAGAYVGLGIILIF. Over 47-58 the chain is Extracellular; that stretch reads TLGNLLDPSVRP. The chain crosses the membrane as a helical span at residues 59-75; sequence LVMGATFGIALTLVIIA. Residues 76 to 107 are Cytoplasmic-facing; it reads GSELFTGHTMFLTLGVKAGTISHGQMWAILPQ. Residues 108-125 traverse the membrane as a helical segment; it reads TWLGNLVGSVFVALLYSW. The Extracellular segment spans residues 126–153; sequence GGGSLLPVDTSIVHSVALAKTTAPATVL. Residues 154 to 172 form a helical membrane-spanning segment; sequence FFKGALCNWLVCLAIWMAI. Residues 173 to 179 lie on the Cytoplasmic side of the membrane; sequence RTEGTAK. A helical membrane pass occupies residues 180 to 195; it reads FLAIWWCLLAFIASGY. The Extracellular portion of the chain corresponds to 196–230; it reads EHSVANMTLFALSWFGHHSDAYTLAGIGHNLLWVT. Residues 231–250 traverse the membrane as a helical segment; it reads LGNTLSGVVFMGLGYWYATP. Topologically, residues 251-269 are cytoplasmic; sequence KSERPAPAKINQPEAAANN.

This sequence belongs to the FNT transporter (TC 1.A.16) family.

Its subcellular location is the cell inner membrane. Catalyzes nitrite uptake and nitrite export across the cytoplasmic membrane. The protein is Nitrite transporter NirC (nirC) of Salmonella typhimurium (strain LT2 / SGSC1412 / ATCC 700720).